The sequence spans 867 residues: DNA endonuclease RBBP8 (867 aa).

The essential for binding to the MRN complex and for RPA focus formation on DNA damage stretch occupies residues 25–48; the sequence is ELWSKLKECHDKELQELLLKINKL. 2 coiled-coil regions span residues 38-87 and 120-141; these read LQEL…EDRL and ITEL…SEQL. 2 disordered regions span residues 141–171 and 448–486; these read LHNM…PDSP and RYGK…HSML. The span at 154 to 166 shows a compositional bias: acidic residues; sequence ENPADTGEGEDGV. Residues 489–493 carry the PXDLS motif motif; that stretch reads PLDLS. A damage-recruitment motif region spans residues 508–531; the sequence is SSRGRTKQTFALVPEKPDPKKPLH. A phosphothreonine mark is found at threonine 817 and threonine 829. A disordered region spans residues 843 to 867; the sequence is SPCQRPRRRQPYNAKFSSKIKEQKT.

Belongs to the COM1/SAE2/CtIP family. In terms of assembly, homotetramer; formed by antiparallel association of helical extensions protruding from the N-termini of two parallel coiled-coil dimers. Interacts with the MRN complex; the interaction links DNA sensing to resection. Interacts with samhd1. Post-translationally, phosphorylation at Thr-817 and Thr-829 promote interaction with nbn and recruitment to double-strand breaks (DSBs).

It is found in the nucleus. The protein resides in the chromosome. Its function is as follows. Endonuclease that cooperates with the MRE11-RAD50-NBN (MRN) complex in DNA-end resection, the first step of double-strand break (DSB) repair through the homologous recombination (HR) pathway. Functions downstream of the MRN complex and ATM, promotes ATR activation and its recruitment to DSBs in the S/G2 phase facilitating the generation of ssDNA. Specifically promotes the endonuclease activity of the MRN complex to clear DNA ends containing protein adducts: recruited to DSBs by nbn following phosphorylation, and promotes the endonuclease of mre11 to clear protein-DNA adducts and generate clean double-strand break ends. The polypeptide is DNA endonuclease RBBP8 (rbbp8) (Xenopus tropicalis (Western clawed frog)).